The following is a 194-amino-acid chain: Imidazoleglycerol-phosphate dehydratase (194 aa).

This sequence belongs to the imidazoleglycerol-phosphate dehydratase family.

Its subcellular location is the cytoplasm. The catalysed reaction is D-erythro-1-(imidazol-4-yl)glycerol 3-phosphate = 3-(imidazol-4-yl)-2-oxopropyl phosphate + H2O. Its pathway is amino-acid biosynthesis; L-histidine biosynthesis; L-histidine from 5-phospho-alpha-D-ribose 1-diphosphate: step 6/9. The protein is Imidazoleglycerol-phosphate dehydratase of Listeria monocytogenes serotype 4b (strain F2365).